Here is a 528-residue protein sequence, read N- to C-terminus: GMP synthase [glutamine-hydrolyzing] (528 aa).

Residues 13–204 enclose the Glutamine amidotransferase type-1 domain; that stretch reads SIVILDFGSQ…VHNICRSKPD (192 aa). Cys-90 (nucleophile) is an active-site residue. Residues His-178 and Glu-180 contribute to the active site. Positions 205–403 constitute a GMPS ATP-PPase domain; it reads WTTNTFIDEA…LGLPEEIVNR (199 aa). An ATP-binding site is contributed by 232–238; the sequence is SGGVDSS.

As to quaternary structure, homodimer.

The catalysed reaction is XMP + L-glutamine + ATP + H2O = GMP + L-glutamate + AMP + diphosphate + 2 H(+). Its pathway is purine metabolism; GMP biosynthesis; GMP from XMP (L-Gln route): step 1/1. Catalyzes the synthesis of GMP from XMP. This is GMP synthase [glutamine-hydrolyzing] from Prochlorococcus marinus (strain SARG / CCMP1375 / SS120).